The chain runs to 201 residues: Outer-membrane lipoprotein LolB (201 aa).

A signal peptide spans M1 to G18. C19 carries the N-palmitoyl cysteine lipid modification. Residue C19 is the site of S-diacylglycerol cysteine attachment.

Belongs to the LolB family. Monomer.

The protein localises to the cell outer membrane. Plays a critical role in the incorporation of lipoproteins in the outer membrane after they are released by the LolA protein. The protein is Outer-membrane lipoprotein LolB of Nitrosococcus oceani (strain ATCC 19707 / BCRC 17464 / JCM 30415 / NCIMB 11848 / C-107).